The chain runs to 59 residues: Large ribosomal subunit protein bL32 (59 aa).

Over residues Met-1–Arg-16 the composition is skewed to basic residues. Positions Met-1 to Asp-20 are disordered.

It belongs to the bacterial ribosomal protein bL32 family.

The protein is Large ribosomal subunit protein bL32 of Novosphingobium aromaticivorans (strain ATCC 700278 / DSM 12444 / CCUG 56034 / CIP 105152 / NBRC 16084 / F199).